We begin with the raw amino-acid sequence, 244 residues long: MKIDLNADLGEGCASDAELLTLVSSANIACGFHAGDAQTMQACVREEIKNGVAIGAHPSFPDRENFGRSAMQLPPETVYAQTLYQIGALATIARAQGGVMRHVKPHGMLYNQAAKEAQLADAIARAVYACDPALVLVGLAGSELIRAGKQYGLTTREEVFADRGYQADGSLVPRSQPGALIENEEQALAQTLEMVQHGRVKSITGEWATVAAQTVCLHGDGEHALAFARRLRATFAKKGIVVAA.

It belongs to the LamB/PxpA family. As to quaternary structure, forms a complex composed of PxpA, PxpB and PxpC.

The enzyme catalyses 5-oxo-L-proline + ATP + 2 H2O = L-glutamate + ADP + phosphate + H(+). Its function is as follows. Catalyzes the cleavage of 5-oxoproline to form L-glutamate coupled to the hydrolysis of ATP to ADP and inorganic phosphate. The sequence is that of 5-oxoprolinase subunit A from Shigella flexneri serotype 5b (strain 8401).